Consider the following 139-residue polypeptide: Putative nickel-responsive regulator (139 aa).

Ni(2+) contacts are provided by His-79, His-90, His-92, and Cys-98.

It belongs to the transcriptional regulatory CopG/NikR family. Requires Ni(2+) as cofactor.

Transcriptional regulator. The chain is Putative nickel-responsive regulator from Nitratidesulfovibrio vulgaris (strain ATCC 29579 / DSM 644 / CCUG 34227 / NCIMB 8303 / VKM B-1760 / Hildenborough) (Desulfovibrio vulgaris).